The chain runs to 148 residues: Protein SprT-like (148 aa).

In terms of domain architecture, SprT-like spans 6–147; the sequence is LQQLVATISM…CGRCQGPIKL (142 aa). Residue His67 coordinates Zn(2+). Glu68 is an active-site residue. His71 contributes to the Zn(2+) binding site.

This sequence belongs to the SprT family. Requires Zn(2+) as cofactor.

It is found in the cytoplasm. The chain is Protein SprT-like from Lactiplantibacillus plantarum (strain ATCC BAA-793 / NCIMB 8826 / WCFS1) (Lactobacillus plantarum).